The chain runs to 70 residues: Probable ferredoxin TA0517 (70 aa).

2 consecutive 4Fe-4S ferredoxin-type domains span residues 8–36 and 37–66; these read TEMD…WLDE and TVIK…AEWF. Cysteine 17, cysteine 20, cysteine 23, cysteine 27, cysteine 46, cysteine 49, cysteine 52, and cysteine 56 together coordinate [4Fe-4S] cluster.

[4Fe-4S] cluster is required as a cofactor.

Ferredoxins are iron-sulfur proteins that transfer electrons in a wide variety of metabolic reactions. The sequence is that of Probable ferredoxin TA0517 from Thermoplasma acidophilum (strain ATCC 25905 / DSM 1728 / JCM 9062 / NBRC 15155 / AMRC-C165).